The chain runs to 140 residues: Lysozyme E (140 aa).

Positions M1–G18 are cleaved as a signal peptide. In terms of domain architecture, C-type lysozyme spans R19–F140. 4 disulfide bridges follow: C24–C139, C45–C129, C80–C96, and C92–C110. Residues E50 and D68 contribute to the active site.

Belongs to the glycosyl hydrolase 22 family. As to expression, found in the midgut.

It carries out the reaction Hydrolysis of (1-&gt;4)-beta-linkages between N-acetylmuramic acid and N-acetyl-D-glucosamine residues in a peptidoglycan and between N-acetyl-D-glucosamine residues in chitodextrins.. Its function is as follows. Unlikely to play an active role in the humoral immune defense. May have a function in the digestion of bacteria in the food. The polypeptide is Lysozyme E (LysE) (Drosophila melanogaster (Fruit fly)).